Consider the following 137-residue polypeptide: Small ribosomal subunit protein uS12 (137 aa).

The protein belongs to the universal ribosomal protein uS12 family. In terms of assembly, part of the 30S ribosomal subunit. Contacts proteins S8 and S17. May interact with IF1 in the 30S initiation complex.

With S4 and S5 plays an important role in translational accuracy. Functionally, interacts with and stabilizes bases of the 16S rRNA that are involved in tRNA selection in the A site and with the mRNA backbone. Located at the interface of the 30S and 50S subunits, it traverses the body of the 30S subunit contacting proteins on the other side and probably holding the rRNA structure together. The combined cluster of proteins S8, S12 and S17 appears to hold together the shoulder and platform of the 30S subunit. In Lactiplantibacillus plantarum (strain ATCC BAA-793 / NCIMB 8826 / WCFS1) (Lactobacillus plantarum), this protein is Small ribosomal subunit protein uS12.